The sequence spans 444 residues: Chromosomal replication initiator protein DnaA (444 aa).

Residues 1-73 (MDSSAQQLWH…AEVVQDIVGY (73 aa)) are domain I, interacts with DnaA modulators. The tract at residues 73–104 (YPVEIQLTAQQGDLIAIFQPHTSLESELSPTN) is domain II. A domain III, AAA+ region region spans residues 105-321 (QLNPKYNFSR…GALIRATTYI (217 aa)). 4 residues coordinate ATP: Gly-149, Gly-151, Lys-152, and Thr-153. Residues 322–444 (SISGLPMTVE…ERINSLSRNQ (123 aa)) are domain IV, binds dsDNA.

Belongs to the DnaA family. As to quaternary structure, oligomerizes as a right-handed, spiral filament on DNA at oriC.

It localises to the cytoplasm. Functionally, plays an essential role in the initiation and regulation of chromosomal replication. ATP-DnaA binds to the origin of replication (oriC) to initiate formation of the DNA replication initiation complex once per cell cycle. Binds the DnaA box (a 9 base pair repeat at the origin) and separates the double-stranded (ds)DNA. Forms a right-handed helical filament on oriC DNA; dsDNA binds to the exterior of the filament while single-stranded (ss)DNA is stabiized in the filament's interior. The ATP-DnaA-oriC complex binds and stabilizes one strand of the AT-rich DNA unwinding element (DUE), permitting loading of DNA polymerase. After initiation quickly degrades to an ADP-DnaA complex that is not apt for DNA replication. Binds acidic phospholipids. This Microcystis aeruginosa (strain NIES-843 / IAM M-2473) protein is Chromosomal replication initiator protein DnaA.